The following is an 87-amino-acid chain: DNA-directed RNA polymerase subunit omega (87 aa).

It belongs to the RNA polymerase subunit omega family. As to quaternary structure, the RNAP catalytic core consists of 2 alpha, 1 beta, 1 beta' and 1 omega subunit. When a sigma factor is associated with the core the holoenzyme is formed, which can initiate transcription.

It catalyses the reaction RNA(n) + a ribonucleoside 5'-triphosphate = RNA(n+1) + diphosphate. In terms of biological role, promotes RNA polymerase assembly. Latches the N- and C-terminal regions of the beta' subunit thereby facilitating its interaction with the beta and alpha subunits. The protein is DNA-directed RNA polymerase subunit omega of Thioalkalivibrio sulfidiphilus (strain HL-EbGR7).